Reading from the N-terminus, the 64-residue chain is Copper-metallothionein (64 aa).

Ser1 is modified (N-acetylserine). Cu(+) is bound by residues Cys7, Cys11, Cys16, Cys18, Cys22, Cys24, Cys28, Cys30, Cys33, Cys36, Cys38, Cys43, Cys45, Cys49, Cys55, Cys57, Cys61, and Cys63.

The protein belongs to the metallothionein superfamily. Type 2 family.

The metallothioneins are involved in the cellular sequestration of toxic metal ions and regulation of essential trace elements. This isoform binds exclusively copper. The protein is Copper-metallothionein of Helix pomatia (Roman snail).